A 159-amino-acid chain; its full sequence is Transcriptional repressor NrdR (159 aa).

A zinc finger lies at 3-34; sequence CPFCGAEDTSVVDSRISEEGARIRRRRRCVEC. Positions 49 to 139 constitute an ATP-cone domain; sequence PQVIKQDGNR…VYRSFEDVGD (91 aa).

Belongs to the NrdR family. Zn(2+) serves as cofactor.

Negatively regulates transcription of bacterial ribonucleotide reductase nrd genes and operons by binding to NrdR-boxes. In Nitrosomonas europaea (strain ATCC 19718 / CIP 103999 / KCTC 2705 / NBRC 14298), this protein is Transcriptional repressor NrdR.